The chain runs to 131 residues: Profilin-3 (131 aa).

The protein belongs to the profilin family. As to quaternary structure, occurs in many kinds of cells as a complex with monomeric actin in a 1:1 ratio.

It is found in the cytoplasm. The protein localises to the cytoskeleton. Its function is as follows. Binds to actin and affects the structure of the cytoskeleton. At high concentrations, profilin prevents the polymerization of actin, whereas it enhances it at low concentrations. By binding to PIP2, it inhibits the formation of IP3 and DG. The chain is Profilin-3 from Hevea brasiliensis (Para rubber tree).